A 424-amino-acid chain; its full sequence is Glutamate-1-semialdehyde 2,1-aminomutase (424 aa).

Residue lysine 263 is modified to N6-(pyridoxal phosphate)lysine.

The protein belongs to the class-III pyridoxal-phosphate-dependent aminotransferase family. HemL subfamily. Homodimer. The cofactor is pyridoxal 5'-phosphate.

It is found in the cytoplasm. The catalysed reaction is (S)-4-amino-5-oxopentanoate = 5-aminolevulinate. It participates in porphyrin-containing compound metabolism; protoporphyrin-IX biosynthesis; 5-aminolevulinate from L-glutamyl-tRNA(Glu): step 2/2. The chain is Glutamate-1-semialdehyde 2,1-aminomutase from Campylobacter jejuni subsp. jejuni serotype O:23/36 (strain 81-176).